The chain runs to 206 residues: Ribosomal RNA large subunit methyltransferase E (206 aa).

S-adenosyl-L-methionine-binding residues include glycine 60, tryptophan 62, aspartate 80, aspartate 96, and aspartate 121. Residue lysine 161 is the Proton acceptor of the active site.

This sequence belongs to the class I-like SAM-binding methyltransferase superfamily. RNA methyltransferase RlmE family.

The protein resides in the cytoplasm. It catalyses the reaction uridine(2552) in 23S rRNA + S-adenosyl-L-methionine = 2'-O-methyluridine(2552) in 23S rRNA + S-adenosyl-L-homocysteine + H(+). Functionally, specifically methylates the uridine in position 2552 of 23S rRNA at the 2'-O position of the ribose in the fully assembled 50S ribosomal subunit. This Legionella pneumophila (strain Lens) protein is Ribosomal RNA large subunit methyltransferase E.